Here is a 123-residue protein sequence, read N- to C-terminus: Histone H2B (123 aa).

The tract at residues 1 to 30 (MPPKTSGKAAKKAGKAQKNITKTDKKKKRR) is disordered. Proline 2 carries the N-methylproline; partial modification. At lysine 44 the chain carries N6-succinyllysine. Serine 110 carries O-linked (GlcNAc) serine glycosylation. N6-succinyllysine occurs at positions 114 and 118. Lysine 118 is covalently cross-linked (Glycyl lysine isopeptide (Lys-Gly) (interchain with G-Cter in ubiquitin)).

Belongs to the histone H2B family. The nucleosome is a histone octamer containing two molecules each of H2A, H2B, H3 and H4 assembled in one H3-H4 heterotetramer and two H2A-H2B heterodimers. The octamer wraps approximately 147 bp of DNA. Post-translationally, phosphorylated by the catalytic component of the Dbf4-dependent kinase (DDK) complex Cdc7. In terms of processing, monoubiquitination of Lys-118 by Bre1 gives a specific tag for epigenetic transcriptional activation and is also prerequisite for histone H3 'Lys-4' and 'Lys-79' methylation. Deubiquitination of Lys-118 by the SAGA complex is involved in activating transcription of a large subset of genes. Methylation at Pro-2 increases upon heat shock. Post-translationally, glcNAcylation at Ser-110 promotes monoubiquitination of Lys-118. It fluctuates in response to extracellular glucose, and associates with transcribed genes.

It is found in the nucleus. It localises to the chromosome. In terms of biological role, core component of nucleosome. Nucleosomes wrap and compact DNA into chromatin, limiting DNA accessibility to the cellular machineries which require DNA as a template. Histones thereby play a central role in transcription regulation, DNA repair, DNA replication and chromosomal stability. DNA accessibility is regulated via a complex set of post-translational modifications of histones, also called histone code, and nucleosome remodeling. The sequence is that of Histone H2B (His2B) from Drosophila yakuba (Fruit fly).